A 231-amino-acid chain; its full sequence is Large ribosomal subunit protein uL1 (231 aa).

The protein belongs to the universal ribosomal protein uL1 family. In terms of assembly, part of the 50S ribosomal subunit.

Binds directly to 23S rRNA. The L1 stalk is quite mobile in the ribosome, and is involved in E site tRNA release. In terms of biological role, protein L1 is also a translational repressor protein, it controls the translation of the L11 operon by binding to its mRNA. This is Large ribosomal subunit protein uL1 from Pseudomonas fluorescens (strain Pf0-1).